The following is a 374-amino-acid chain: Nuclear hormone receptor family member nhr-57 (374 aa).

The segment at residues 7-84 (RKYCSVCHQL…VGMNPEVVQA (78 aa)) is a DNA-binding region (nuclear receptor). NR C4-type zinc fingers lie at residues 10–30 (CSVC…CKAC) and 48–67 (CRKK…CKSC). Positions 124–374 (QMTPTLCGVM…DKIYKIIDGQ (251 aa)) constitute an NR LBD domain.

Belongs to the nuclear hormone receptor family.

Its subcellular location is the nucleus. Its function is as follows. Orphan nuclear receptor. The sequence is that of Nuclear hormone receptor family member nhr-57 (nhr-57) from Caenorhabditis elegans.